We begin with the raw amino-acid sequence, 254 residues long: 3-oxo-5-alpha-steroid 4-dehydrogenase 2 (254 aa).

4 helical membrane passes run 8-28 (VPVLAGSATLATMGTLILCFG), 72-92 (PRSLFGPPGNVLLGLFSAHYF), 146-166 (FSVGVFFFILGMGINIHSDCM), and 206-226 (LATWSVPAFAFAFFTLCFLGM).

The protein belongs to the steroid 5-alpha reductase family.

It localises to the microsome membrane. The protein localises to the endoplasmic reticulum membrane. The catalysed reaction is a 3-oxo-5alpha-steroid + NADP(+) = a 3-oxo-Delta(4)-steroid + NADPH + H(+). The enzyme catalyses 17beta-hydroxy-5alpha-androstan-3-one + NADP(+) = testosterone + NADPH + H(+). It carries out the reaction 5alpha-pregnane-3,20-dione + NADP(+) = progesterone + NADPH + H(+). Converts testosterone (T) into 5-alpha-dihydrotestosterone (DHT) and progesterone or corticosterone into their corresponding 5-alpha-3-oxosteroids. It plays a central role in sexual differentiation and androgen physiology. This Mus musculus (Mouse) protein is 3-oxo-5-alpha-steroid 4-dehydrogenase 2 (Srd5a2).